Reading from the N-terminus, the 4466-residue chain is Dynein beta chain, ciliary (4466 aa).

Positions methionine 1 to lysine 1813 are stem. Alanine 154–threonine 161 lines the ATP pocket. 4 coiled-coil regions span residues threonine 733–glutamine 805, threonine 1036–glutamate 1056, tryptophan 1306–alanine 1337, and leucine 1443–lysine 1468. 4 AAA regions span residues tyrosine 1814–valine 2035, lysine 2095–lysine 2316, glutamate 2422–glycine 2669, and threonine 2767–tyrosine 3016. ATP contacts are provided by residues glycine 1852–threonine 1859, glycine 2133–serine 2140, glycine 2460–serine 2467, and glycine 2805–glutamine 2812. Coiled coils occupy residues serine 3033–glycine 3092, glutamate 3263–isoleucine 3325, and glutamine 3573–lysine 3642. Positions serine 3033–isoleucine 3325 are stalk. 2 AAA regions span residues leucine 3409 to valine 3636 and valine 3846 to asparagine 4072.

It belongs to the dynein heavy chain family. In terms of assembly, consists of at least two heavy chains (alpha and beta), three intermediate chains and several light chains.

The protein resides in the cell projection. It is found in the cilium. Its subcellular location is the flagellum. The protein localises to the cytoplasm. It localises to the cytoskeleton. The protein resides in the flagellum axoneme. In terms of biological role, force generating protein of eukaryotic cilia and flagella. Produces force towards the minus ends of microtubules. Dynein has ATPase activity; the force-producing power stroke is thought to occur on release of ADP. The chain is Dynein beta chain, ciliary from Tripneustes gratilla (Hawaian sea urchin).